The primary structure comprises 428 residues: Histidine--tRNA ligase (428 aa).

The protein belongs to the class-II aminoacyl-tRNA synthetase family. In terms of assembly, homodimer.

The protein resides in the cytoplasm. It catalyses the reaction tRNA(His) + L-histidine + ATP = L-histidyl-tRNA(His) + AMP + diphosphate + H(+). The protein is Histidine--tRNA ligase of Lactobacillus delbrueckii subsp. bulgaricus (strain ATCC 11842 / DSM 20081 / BCRC 10696 / JCM 1002 / NBRC 13953 / NCIMB 11778 / NCTC 12712 / WDCM 00102 / Lb 14).